Here is a 580-residue protein sequence, read N- to C-terminus: PTS system fructose-specific EIIB'BC component (580 aa).

2 PTS EIIB type-2 domains span residues 3 to 100 (MKIA…QAAE) and 124 to 221 (KKIV…NAFA). Residues C11 and C132 each act as phosphocysteine intermediate; for EIIB activity in the active site. Phosphocysteine; by EIIA occurs at positions 11 and 132. The region spanning 244–579 (VYKHLMTGVS…KKSAQAKAVA (336 aa)) is the PTS EIIC type-2 domain. Transmembrane regions (helical) follow at residues 254–274 (HMLPVVVAGGLIIALSFVFGI), 292–312 (GGSAFALMIPVLAGYIAFSIA), 322–342 (IGGMLASSTGAGFLGGIVAGF), 367–387 (ILIIPFIASLFTGLVMIYVVG), 408–428 (NAILLGIVLGAMMCFDLGGPV), 448–468 (MAAIMAAGMVPALGMGLATFI), 480–500 (AGKASFVLGLCFISEGAIPFA), 507–527 (VIPACMVGGAVTGALSMLFGA), and 537–557 (FVLLIPNAISPVLLYLVAIAV).

Its subcellular location is the cell inner membrane. It carries out the reaction D-fructose(out) + N(pros)-phospho-L-histidyl-[protein] = D-fructose 1-phosphate(in) + L-histidyl-[protein]. Functionally, the phosphoenolpyruvate-dependent sugar phosphotransferase system (sugar PTS), a major carbohydrate active transport system, catalyzes the phosphorylation of incoming sugar substrates concomitantly with their translocation across the cell membrane. The enzyme II FruAB PTS system is involved in fructose transport. The sequence is that of PTS system fructose-specific EIIB'BC component from Vibrio cholerae serotype O1 (strain ATCC 39315 / El Tor Inaba N16961).